The following is a 245-amino-acid chain: Carboxymethylenebutenolidase homolog (245 aa).

Alanine 2 bears the N-acetylalanine mark. An N6-acetyllysine modification is found at lysine 36. Residues cysteine 132, aspartate 179, and histidine 212 contribute to the active site. At serine 223 the chain carries Phosphoserine.

This sequence belongs to the dienelactone hydrolase family.

The protein localises to the cytoplasm. The protein resides in the cytosol. In terms of biological role, cysteine hydrolase. This is Carboxymethylenebutenolidase homolog (CMBL) from Pongo abelii (Sumatran orangutan).